Here is an 856-residue protein sequence, read N- to C-terminus: Wall-associated receptor kinase 17 (856 aa).

Residues 1 to 42 form the signal peptide; sequence MPSRSPACRPRGRNRRSAADAVARPLALALILVSTLPRAAHS. 2 N-linked (GlcNAc...) asparagine glycosylation sites follow: N171 and N234. An EGF-like 1 domain is found at 297 to 334; that stretch reads FEKLCKYGTCVDAPTGAGYLCKCPSGYDGNPYVSDGCQ. Cystine bridges form between C301/C306, C319/C333, C339/C353, C347/C362, and C364/C379. An EGF-like 2; calcium-binding domain is found at 335 to 380; sequence DINECRNYNSNNCTYQNLCNNTLGGYTCSCPENNIGDGYRTGTGCN. N-linked (GlcNAc...) asparagine glycosylation is found at N346 and N354. An N-linked (GlcNAc...) asparagine glycan is attached at N380. Residues 452-470 traverse the membrane as a helical segment; that stretch reads VLGVSLVLMVTTTTAASCY. A Protein kinase domain is found at 527-805; the sequence is YSESRILGRG…VLQELRRSFT (279 aa). Residues 533–541 and K555 each bind ATP; that span reads LGRGGQGTV. D652 acts as the Proton acceptor in catalysis. Residues 816-844 form a disordered region; that stretch reads SIQENSEQEEKHLHESRSIPSLQSSEVST. Residues 823-832 show a composition bias toward basic and acidic residues; that stretch reads QEEKHLHESR. A compositionally biased stretch (polar residues) spans 833 to 844; the sequence is SIPSLQSSEVST.

The protein belongs to the protein kinase superfamily. Ser/Thr protein kinase family. As to quaternary structure, interacts with WAK17 isoform 2; the interaction is direct. Interacts with LRR5; the interaction is direct. Interacts with WAK17 isoform 1; the interaction is direct. In terms of assembly, (Microbial infection) Interacts with G.zeae CFEM1 (via CFEM domain); the interaction is direct. Interacts with G.zeae CFEMN1; the interaction is direct. Interacts with G.zeae CFEM5; the interaction is direct. Mn(2+) serves as cofactor. Requires Mg(2+) as cofactor.

The protein resides in the cell membrane. The enzyme catalyses L-seryl-[protein] + ATP = O-phospho-L-seryl-[protein] + ADP + H(+). It catalyses the reaction L-threonyl-[protein] + ATP = O-phospho-L-threonyl-[protein] + ADP + H(+). In terms of biological role, kinase that contributes to activation of the hypersensitive response, a form of programmed cell death, upon fungal infection. Its function is as follows. Secreted protein that contributes to activation of the hypersensitive response, a form of programmed cell death, upon fungal infection. May sense the presence of fungal material and relay the signal to WAK17 isoform 1. This Zea mays (Maize) protein is Wall-associated receptor kinase 17.